The chain runs to 231 residues: Heptaprenylglyceryl phosphate synthase (231 aa).

K12 contributes to the sn-glycerol 1-phosphate binding site. Positions 14 and 40 each coordinate Mg(2+). Sn-glycerol 1-phosphate contacts are provided by residues 159-164, G189, and 209-210; these read YMEYSG and GN.

It belongs to the GGGP/HepGP synthase family. Group I subfamily. As to quaternary structure, homodimer. Mg(2+) is required as a cofactor.

It carries out the reaction sn-glycerol 1-phosphate + all-trans-heptaprenyl diphosphate = 3-heptaprenyl-sn-glycero-1-phosphate + diphosphate. Its pathway is membrane lipid metabolism; glycerophospholipid metabolism. In terms of biological role, prenyltransferase that catalyzes in vivo the transfer of the heptaprenyl moiety of heptaprenyl pyrophosphate (HepPP; 35 carbon atoms) to the C3 hydroxyl of sn-glycerol-1-phosphate (G1P), producing heptaprenylglyceryl phosphate (HepGP). This reaction is an ether-bond-formation step in the biosynthesis of archaea-type G1P-based membrane lipids found in Bacillales. This chain is Heptaprenylglyceryl phosphate synthase, found in Brevibacillus brevis (strain 47 / JCM 6285 / NBRC 100599).